The chain runs to 96 residues: Secreted RxLR effector protein 123 (96 aa).

The first 22 residues, 1 to 22 (MVGAYYVGIALLVAGGSQTAAG), serve as a signal peptide directing secretion. The RxLR-dEER motif lies at 49-70 (RFLRKSRNPKDNLMLSEANEER). The tract at residues 57-96 (PKDNLMLSEANEERTPSSPSNSLTEFIVSEPITTNVMRTE) is disordered. Residues 87 to 96 (PITTNVMRTE) are compositionally biased toward polar residues.

Belongs to the RxLR effector family.

Its subcellular location is the secreted. It is found in the host nucleus. The protein resides in the host cytoplasm. Its function is as follows. Secreted effector that dos not suppress the host cell death induced by cell death-inducing proteins. The chain is Secreted RxLR effector protein 123 from Plasmopara viticola (Downy mildew of grapevine).